A 171-amino-acid polypeptide reads, in one-letter code: Peptide methionine sulfoxide reductase MsrA (171 aa).

Residue Cys13 is part of the active site.

Belongs to the MsrA Met sulfoxide reductase family.

The enzyme catalyses L-methionyl-[protein] + [thioredoxin]-disulfide + H2O = L-methionyl-(S)-S-oxide-[protein] + [thioredoxin]-dithiol. The catalysed reaction is [thioredoxin]-disulfide + L-methionine + H2O = L-methionine (S)-S-oxide + [thioredoxin]-dithiol. In terms of biological role, has an important function as a repair enzyme for proteins that have been inactivated by oxidation. Catalyzes the reversible oxidation-reduction of methionine sulfoxide in proteins to methionine. This is Peptide methionine sulfoxide reductase MsrA from Mycobacterium sp. (strain MCS).